Reading from the N-terminus, the 187-residue chain is Mitochondrial intermembrane space import and assembly protein 40 (187 aa).

Residues 1-24 (MFRPASRALLRAPAVARGPASRRL) constitute a mitochondrion transit peptide. Over 25 to 43 (ISTAPAESKPRSWKNTAVR) the chain is Mitochondrial matrix. The helical; Signal-anchor for type II membrane protein transmembrane segment at 44-61 (LGLAAGAIYYYNTSNVFA) threads the bilayer. Residues 62–187 (ENPSFSLNNQ…MDCIEKFKCV (126 aa)) lie on the Mitochondrial intermembrane side of the membrane. Positions 73–115 (KKNSAEEPLPTLDSIKPRIREERESAAPKPNAEQAPAQELPFG) are disordered. Basic and acidic residues predominate over residues 87–98 (IKPRIREERESA). 2 disulfides stabilise this stretch: Cys-146–Cys-148 and Cys-167–Cys-180. One can recognise a CHCH domain in the interval 154 to 187 (HGPCGEEFKAAFSCFVYSEEEPKGMDCIEKFKCV). The short motif at 157–167 (CGEEFKAAFSC) is the Cx9C motif element.

As to quaternary structure, monomer. The cofactor is Cu(2+). Requires Zn(2+) as cofactor.

It localises to the mitochondrion inner membrane. Functionally, required for the import and folding of small cysteine-containing proteins (small Tim) in the mitochondrial intermembrane space (IMS). Forms a redox cycle with ERV1 that involves a disulfide relay system. Precursor proteins to be imported into the IMS are translocated in their reduced form into the mitochondria. The oxidized form of MIA40 forms a transient intermolecular disulfide bridge with the reduced precursor protein, resulting in oxidation of the precursor protein that now contains an intramolecular disulfide bond and is able to undergo folding in the IMS. The sequence is that of Mitochondrial intermembrane space import and assembly protein 40 (mia40) from Aspergillus oryzae (strain ATCC 42149 / RIB 40) (Yellow koji mold).